The following is a 648-amino-acid chain: Magnetosome protein MamZ (648 aa).

A major facilitator domain region spans residues 1-431 (MLEAWMPKSG…YAAWLLANGI (431 aa)). The next 18 membrane-spanning stretches (helical) occupy residues 28 to 49 (IIYL…IQPL), 69 to 87 (IQVV…FGLL), 94 to 113 (VRII…MSLL), 119 to 143 (LAFG…ADTV), 163 to 182 (LMGN…SAII), 188 to 207 (YKGG…IAGF), 252 to 273 (FYTR…ISVS), 285 to 305 (AHAA…IPLW), 317 to 335 (AIGA…LGMF), 341 to 361 (WLVA…FVTL), 373 to 395 (ILGA…LVQS), 407 to 428 (APFI…WLLA), 449 to 468 (PLVF…RSVI), 488 to 506 (YLGD…MRPV), 518 to 538 (YRRM…LAYV), 558 to 574 (FILL…PLAF), 595 to 612 (ATYV…LAAN), and 618 to 634 (PYVY…YRFY). Residues 444–645 (KVDWKPLVFL…WRGGNVLRAL (202 aa)) form a ferric reductase-like domain, required for correct magnetite crystal formation region.

In the N-terminal section; belongs to the major facilitator superfamily. Probably interacts with FtsZ-like and MamY proteins.

It is found in the magnetosome membrane. Its function is as follows. Required for correct biomineralization of the magnetosome; probably converts and then transports some form of iron. It is partially functionally redundant with MamH. May function with MamX, MamY amd Mms6 in biomineralization. Despite its strong similarity to MsrQ (AC V6EX82) this protein does not genetically interact with bona fide MsrP (AC V6F0A4), which is encoded elsewhere in the genome. This Magnetospirillum gryphiswaldense (strain DSM 6361 / JCM 21280 / NBRC 15271 / MSR-1) protein is Magnetosome protein MamZ.